The sequence spans 451 residues: Arginine biosynthesis bifunctional protein ArgJ, mitochondrial (451 aa).

6 residues coordinate substrate: Thr-180, Lys-209, Thr-220, Glu-307, Asn-446, and Thr-451. Thr-220 serves as the catalytic Nucleophile.

Belongs to the ArgJ family. Heterodimer of an alpha and a beta chain. The alpha and beta chains are autoproteolytically processed from a single precursor protein within the mitochondrion.

The protein localises to the mitochondrion matrix. It catalyses the reaction N(2)-acetyl-L-ornithine + L-glutamate = N-acetyl-L-glutamate + L-ornithine. It carries out the reaction L-glutamate + acetyl-CoA = N-acetyl-L-glutamate + CoA + H(+). Its pathway is amino-acid biosynthesis; L-arginine biosynthesis; L-ornithine and N-acetyl-L-glutamate from L-glutamate and N(2)-acetyl-L-ornithine (cyclic): step 1/1. It participates in amino-acid biosynthesis; L-arginine biosynthesis; N(2)-acetyl-L-ornithine from L-glutamate: step 1/4. Its function is as follows. Catalyzes two activities which are involved in the cyclic version of arginine biosynthesis: the synthesis of acetylglutamate from glutamate and acetyl-CoA, and of ornithine by transacetylation between acetylornithine and glutamate. The chain is Arginine biosynthesis bifunctional protein ArgJ, mitochondrial from Fusarium vanettenii (strain ATCC MYA-4622 / CBS 123669 / FGSC 9596 / NRRL 45880 / 77-13-4) (Fusarium solani subsp. pisi).